A 265-amino-acid polypeptide reads, in one-letter code: Ribosomal RNA large subunit methyltransferase E (265 aa).

S-adenosyl-L-methionine-binding residues include glycine 83, tryptophan 85, aspartate 106, aspartate 122, and aspartate 146. Lysine 186 serves as the catalytic Proton acceptor. A disordered region spans residues 230–265; it reads KGREAGPPSGGSERPVDVSKDLSARSDSEGPGDAEG. The segment covering 243-257 has biased composition (basic and acidic residues); the sequence is RPVDVSKDLSARSDS.

This sequence belongs to the class I-like SAM-binding methyltransferase superfamily. RNA methyltransferase RlmE family.

It localises to the cytoplasm. It catalyses the reaction uridine(2552) in 23S rRNA + S-adenosyl-L-methionine = 2'-O-methyluridine(2552) in 23S rRNA + S-adenosyl-L-homocysteine + H(+). In terms of biological role, specifically methylates the uridine in position 2552 of 23S rRNA at the 2'-O position of the ribose in the fully assembled 50S ribosomal subunit. The sequence is that of Ribosomal RNA large subunit methyltransferase E from Mesorhizobium japonicum (strain LMG 29417 / CECT 9101 / MAFF 303099) (Mesorhizobium loti (strain MAFF 303099)).